The chain runs to 396 residues: 1-deoxy-D-xylulose 5-phosphate reductoisomerase (396 aa).

Positions 13, 14, 15, 16, and 127 each coordinate NADPH. Residue Lys-128 coordinates 1-deoxy-D-xylulose 5-phosphate. Residue Glu-129 participates in NADPH binding. A Mn(2+)-binding site is contributed by Asp-153. Positions 154, 155, 184, and 207 each coordinate 1-deoxy-D-xylulose 5-phosphate. A Mn(2+)-binding site is contributed by Glu-155. Position 213 (Gly-213) interacts with NADPH. Positions 220, 225, 226, and 229 each coordinate 1-deoxy-D-xylulose 5-phosphate. Residue Glu-229 coordinates Mn(2+).

It belongs to the DXR family. It depends on Mg(2+) as a cofactor. Mn(2+) serves as cofactor.

It carries out the reaction 2-C-methyl-D-erythritol 4-phosphate + NADP(+) = 1-deoxy-D-xylulose 5-phosphate + NADPH + H(+). It functions in the pathway isoprenoid biosynthesis; isopentenyl diphosphate biosynthesis via DXP pathway; isopentenyl diphosphate from 1-deoxy-D-xylulose 5-phosphate: step 1/6. In terms of biological role, catalyzes the NADPH-dependent rearrangement and reduction of 1-deoxy-D-xylulose-5-phosphate (DXP) to 2-C-methyl-D-erythritol 4-phosphate (MEP). The chain is 1-deoxy-D-xylulose 5-phosphate reductoisomerase from Pseudomonas putida (strain W619).